Reading from the N-terminus, the 68-residue chain is Protein P34 (68 aa).

The next 2 helical transmembrane spans lie at 4-24 (FVGPIVTVLTAIIGVAILAVL) and 41-61 (GFSSMLGTALSPVTGGTGFAM).

It is found in the virion membrane. The chain is Protein P34 (XXXIV) from Acinetobacter calcoaceticus (Arthrobacter siderocapsulatus).